The chain runs to 753 residues: Taperin (753 aa).

The interval 141–348 is disordered; it reads FDSPAAPRRR…IRPSSKPDME (208 aa). Pro residues predominate over residues 182–197; the sequence is PAPPVLPSQPAPPISP. Polar residues-rich tracts occupy residues 230–239 and 250–263; these read LQKTGSNSFT and VNRS…TQES. Phosphoserine is present on serine 274. The span at 300–322 shows a compositional bias: low complexity; that stretch reads TPSATPVGPPAFLAPSPASATPS. The segment covering 323–335 has biased composition (polar residues); it reads QRQWVSSATSAND. Residues 337 to 347 are compositionally biased toward basic and acidic residues; that stretch reads FEIRPSSKPDM. Residues serine 402, serine 458, and serine 502 each carry the phosphoserine modification. The interval 438-488 is disordered; it reads GCPRPAISDTDKSVRRQRPASPPPFLPATTEAEPAEGLGVPGLTKNGQEPV. Disordered stretches follow at residues 544 to 583 and 637 to 676; these read FTVV…SGPH and FEYP…DSEK. Positions 559–571 are enriched in polar residues; the sequence is HLSQTNGQFQQGA. A compositionally biased stretch (acidic residues) spans 648-672; it reads EEAEEEEEEEEEEEGEDGEEEEVGP.

Belongs to the taperin family. In terms of assembly, interacts with GRXCR2; the interaction restricts TPRN to the stereocilum basal region. Interacts with actin ACTB; the interaction may stabilize stereocilia. Interacts with CLIC5. Interacts with PTPRQ. TPRN, CLIC5 and PTPQR form concentric rings at the base of stereocilia and may form a complex. Interacts with phosphatase PPP1CA; the interaction results in inhibition of PPC1A phosphatase activity. Interacts with DNA damage response proteins XRCC6/KU70, XRCC5/KU80, PARP1, TOP1 and TOP2A; these interactions recruit TPRN to sites of DNA damage where it may play a role in DNA repair.

Its subcellular location is the cell projection. The protein localises to the stereocilium. The protein resides in the microvillus. It localises to the nucleus. It is found in the nucleoplasm. Its subcellular location is the cytoplasm. Functionally, essential for hearing. Required for maintenance of stereocilia on both inner and outer hair cells. Necessary for the integrity of the stereociliary rootlet. May act as an actin cytoskeleton regulator involved in the regulation of actin dynamics at the pointed end in hair cells. Forms rings at the base of stereocilia and binds actin filaments in the stereocilia which may stabilize the stereocilia. Acts as a strong inhibitor of PPP1CA phosphatase activity. Recruited to sites of DNA damage and may play a role in DNA damage repair. In Rattus norvegicus (Rat), this protein is Taperin (Tprn).